We begin with the raw amino-acid sequence, 336 residues long: Coproporphyrin III ferrochelatase (336 aa).

The Fe-coproporphyrin III site is built by serine 52 and tyrosine 116. Fe(2+) contacts are provided by histidine 172 and glutamate 255.

Belongs to the ferrochelatase family.

It is found in the cytoplasm. It catalyses the reaction Fe-coproporphyrin III + 2 H(+) = coproporphyrin III + Fe(2+). The protein operates within porphyrin-containing compound metabolism; protoheme biosynthesis. Involved in coproporphyrin-dependent heme b biosynthesis. Catalyzes the insertion of ferrous iron into coproporphyrin III to form Fe-coproporphyrin III. This chain is Coproporphyrin III ferrochelatase, found in Mycobacterium avium (strain 104).